The sequence spans 173 residues: Large ribosomal subunit protein uL10 (173 aa).

This sequence belongs to the universal ribosomal protein uL10 family. As to quaternary structure, part of the ribosomal stalk of the 50S ribosomal subunit. The N-terminus interacts with L11 and the large rRNA to form the base of the stalk. The C-terminus forms an elongated spine to which L12 dimers bind in a sequential fashion forming a multimeric L10(L12)X complex.

In terms of biological role, forms part of the ribosomal stalk, playing a central role in the interaction of the ribosome with GTP-bound translation factors. In Cupriavidus necator (strain ATCC 17699 / DSM 428 / KCTC 22496 / NCIMB 10442 / H16 / Stanier 337) (Ralstonia eutropha), this protein is Large ribosomal subunit protein uL10.